The primary structure comprises 361 residues: DNA replication and repair protein RecF (361 aa).

30 to 37 provides a ligand contact to ATP; that stretch reads GDNAQGKT.

This sequence belongs to the RecF family.

Its subcellular location is the cytoplasm. The RecF protein is involved in DNA metabolism; it is required for DNA replication and normal SOS inducibility. RecF binds preferentially to single-stranded, linear DNA. It also seems to bind ATP. The protein is DNA replication and repair protein RecF of Clostridium botulinum (strain Eklund 17B / Type B).